The sequence spans 360 residues: Peptide chain release factor 1 (360 aa).

Gln235 bears the N5-methylglutamine mark. Over residues 283 to 293 (EREAQAKEASA) the composition is skewed to basic and acidic residues. A disordered region spans residues 283-305 (EREAQAKEASARKSLIGSGDRSD).

This sequence belongs to the prokaryotic/mitochondrial release factor family. Methylated by PrmC. Methylation increases the termination efficiency of RF1.

The protein localises to the cytoplasm. Its function is as follows. Peptide chain release factor 1 directs the termination of translation in response to the peptide chain termination codons UAG and UAA. The polypeptide is Peptide chain release factor 1 (Ralstonia pickettii (strain 12J)).